Here is a 437-residue protein sequence, read N- to C-terminus: Enolase (437 aa).

Substrate contacts are provided by His160 and Glu169. Residue Glu212 is the Proton donor of the active site. Asp247, Glu296, and Asp321 together coordinate Mg(2+). Substrate is bound by residues Glu296 and Asp321. The active-site Proton acceptor is the Lys346. Substrate contacts are provided by residues 373-376 (SHRS) and Lys397.

It belongs to the enolase family. As to quaternary structure, homodimer. Requires Mg(2+) as cofactor.

It is found in the cytoplasm. It catalyses the reaction (2R)-2-phosphoglycerate = phosphoenolpyruvate + H2O. It participates in carbohydrate degradation; glycolysis; pyruvate from D-glyceraldehyde 3-phosphate: step 4/5. The polypeptide is Enolase (ENO) (Eremothecium gossypii (strain ATCC 10895 / CBS 109.51 / FGSC 9923 / NRRL Y-1056) (Yeast)).